A 201-amino-acid chain; its full sequence is 3-isopropylmalate dehydratase small subunit (201 aa).

It belongs to the LeuD family. LeuD type 1 subfamily. Heterodimer of LeuC and LeuD.

The catalysed reaction is (2R,3S)-3-isopropylmalate = (2S)-2-isopropylmalate. Its pathway is amino-acid biosynthesis; L-leucine biosynthesis; L-leucine from 3-methyl-2-oxobutanoate: step 2/4. Its function is as follows. Catalyzes the isomerization between 2-isopropylmalate and 3-isopropylmalate, via the formation of 2-isopropylmaleate. The sequence is that of 3-isopropylmalate dehydratase small subunit from Jannaschia sp. (strain CCS1).